The chain runs to 251 residues: tRNA-cytidine(32) 2-sulfurtransferase 2 (251 aa).

Positions 33 to 38 (SGGKDS) match the PP-loop motif motif. [4Fe-4S] cluster contacts are provided by Cys-108, Cys-111, and Cys-199.

Belongs to the TtcA family. Homodimer. It depends on Mg(2+) as a cofactor. The cofactor is [4Fe-4S] cluster.

The protein resides in the cytoplasm. It carries out the reaction cytidine(32) in tRNA + S-sulfanyl-L-cysteinyl-[cysteine desulfurase] + AH2 + ATP = 2-thiocytidine(32) in tRNA + L-cysteinyl-[cysteine desulfurase] + A + AMP + diphosphate + H(+). It participates in tRNA modification. Its function is as follows. Catalyzes the ATP-dependent 2-thiolation of cytidine in position 32 of tRNA, to form 2-thiocytidine (s(2)C32). The sulfur atoms are provided by the cysteine/cysteine desulfurase (IscS) system. The polypeptide is tRNA-cytidine(32) 2-sulfurtransferase 2 (Francisella tularensis subsp. tularensis (strain WY96-3418)).